We begin with the raw amino-acid sequence, 32 residues long: Defensin-3 (32 aa).

Intrachain disulfides connect Cys-3–Cys-31, Cys-5–Cys-20, and Cys-10–Cys-30.

The protein localises to the secreted. Has antibacterial activity against the Gram-negative bacterium E.coli and the Gram-positive bacteria L.monocytogenes and S.aureus. Has antifungal activity against C.albicans. The polypeptide is Defensin-3 (Papio hamadryas (Hamadryas baboon)).